Reading from the N-terminus, the 143-residue chain is Transcriptional regulator MraZ (143 aa).

2 consecutive SpoVT-AbrB domains span residues 5–47 and 76–119; these read SHTP…PLAE and ASDD…DSQR.

It belongs to the MraZ family. As to quaternary structure, forms oligomers.

The protein localises to the cytoplasm. Its subcellular location is the nucleoid. The polypeptide is Transcriptional regulator MraZ (Parafrankia sp. (strain EAN1pec)).